Reading from the N-terminus, the 357-residue chain is Histidine biosynthesis bifunctional protein HisB (357 aa).

Positions 1–168 are histidinol-phosphatase; it reads MSEKVLFIDR…IVFKLTKKHD (168 aa). The active-site Nucleophile is Asp-9. Residues Asp-9 and Asp-11 each coordinate Mg(2+). Asp-11 functions as the Proton donor in the catalytic mechanism. Positions 93, 95, 101, and 103 each coordinate Zn(2+). Mg(2+) is bound at residue Asp-130. Residues 169-357 form an imidazoleglycerol-phosphate dehydratase region; sequence RHAKVVRNTK…KNLPSSKGLL (189 aa).

The protein in the N-terminal section; belongs to the histidinol-phosphatase family. In the C-terminal section; belongs to the imidazoleglycerol-phosphate dehydratase family. Mg(2+) is required as a cofactor. It depends on Zn(2+) as a cofactor.

It localises to the cytoplasm. It catalyses the reaction D-erythro-1-(imidazol-4-yl)glycerol 3-phosphate = 3-(imidazol-4-yl)-2-oxopropyl phosphate + H2O. The catalysed reaction is L-histidinol phosphate + H2O = L-histidinol + phosphate. The protein operates within amino-acid biosynthesis; L-histidine biosynthesis; L-histidine from 5-phospho-alpha-D-ribose 1-diphosphate: step 6/9. Its pathway is amino-acid biosynthesis; L-histidine biosynthesis; L-histidine from 5-phospho-alpha-D-ribose 1-diphosphate: step 8/9. This Buchnera aphidicola subsp. Baizongia pistaciae (strain Bp) protein is Histidine biosynthesis bifunctional protein HisB.